We begin with the raw amino-acid sequence, 147 residues long: Large ribosomal subunit protein bL9 (147 aa).

The protein belongs to the bacterial ribosomal protein bL9 family.

Its function is as follows. Binds to the 23S rRNA. This Geotalea daltonii (strain DSM 22248 / JCM 15807 / FRC-32) (Geobacter daltonii) protein is Large ribosomal subunit protein bL9.